Reading from the N-terminus, the 93-residue chain is FMRFamide-like neuropeptides 22 (93 aa).

Residues 1-19 (MNRSMIALCVVLMVSLVSA) form the signal peptide. Residues 20–46 (QVFDLDGQQLAGLEQNDARLMEQQVKR) constitute a propeptide that is removed on maturation. Residues phenylalanine 55, phenylalanine 67, and phenylalanine 79 each carry the phenylalanine amide modification. The propeptide occupies 83–93 (SGAEAVSEQDY).

The protein belongs to the FARP (FMRFamide related peptide) family.

It is found in the secreted. Functionally, FMRFamides and FMRFamide-like peptides are neuropeptides. SPSAKWMRF-amide: Acts as a ligand for the npr-22 receptor in vitro. The chain is FMRFamide-like neuropeptides 22 from Caenorhabditis elegans.